The following is a 176-amino-acid chain: DNA repair RAD52-like protein 1, mitochondrial (176 aa).

A mitochondrion-targeting transit peptide spans 1 to 37 (MAGLGLRLKAAKWTLRSGSGAVSREWSSEMGKGVRRF).

Belongs to the RAD52 family. In terms of assembly, interacts with WHY2. As to expression, expressed in root vascular tissue, tips of primary and secondary roots, young leaves, hydathodes, stomatal guard cells, cauline leaves, flower buds, stipules, carpels, pistils and anther filaments.

It localises to the mitochondrion. It is found in the nucleus. Plant-specific single-stranded DNA-binding protein required for efficient heterologous recombination-dependent DNA repair in nuclear and mitochondrial compartments. Forms large nucleo-protein complexes with WHY2 in mitochondria. Binds ssDNA with high affinity, but with little sequence specificity. Involved in double-stranded DNA break repair. Involved in the hydrolytic splicing pathway in mitochondrion. Facilitates the excision of two cis-spliced group II introns, NAD1 intron 2 and NAD2 intron 1. In Arabidopsis thaliana (Mouse-ear cress), this protein is DNA repair RAD52-like protein 1, mitochondrial.